The chain runs to 525 residues: Serine/threonine protein phosphatase 2A 55 kDa regulatory subunit B beta isoform (525 aa).

A disordered region spans residues 1–31; sequence MDPFSKSPDDDDLRPEAEAARRPQPQPQPRE. 2 WD repeats span residues 48–87 and 124–165; these read QEVDIISAIEFDKSGDHLATGDRGGRVVLFERTDSRDSAS and EIEE…VKRI. Residues 169–191 are disordered; that stretch reads NLNTSQSSGNGTTSSSSSSSSRA. The segment covering 171 to 189 has biased composition (low complexity); sequence NTSQSSGNGTTSSSSSSSS. 4 WD repeats span residues 244–282, 293–333, 352–390, and 495–525; these read AHDYHINSISNNSDGETYISADDLRINLWNLEISNQSFN, DLTE…LCDN, EIIASVSDIKFARDGRHILSRDYMTLKLWDINMDSGPVA, and DLSTKLLHLAWHPTENSIACAAANSLYMYYA.

The protein belongs to the phosphatase 2A regulatory subunit B family. As to quaternary structure, PP2A consists of a common heteromeric enzyme, composed of a catalytic subunit (subunits C), a constant regulatory subunit (subunit A), and a variety of regulatory subunits such as subunits B (the R2/B/PR55/B55, R3/B''/PR72/PR130/PR59 and R5/B'/B56 families).

Functionally, the B regulatory subunit may modulate substrate selectivity and catalytic activity, and may also direct the localization of the catalytic enzyme to a particular subcellular compartment. The sequence is that of Serine/threonine protein phosphatase 2A 55 kDa regulatory subunit B beta isoform from Oryza sativa subsp. indica (Rice).